The chain runs to 203 residues: Recombination protein RecR (203 aa).

The C4-type zinc-finger motif lies at 56–71 (CAVCGNVSDNERCRIC). The Toprim domain occupies 79–179 (SVVCIVEEPK…TVTRIASGLP (101 aa)).

This sequence belongs to the RecR family.

Its function is as follows. May play a role in DNA repair. It seems to be involved in an RecBC-independent recombinational process of DNA repair. It may act with RecF and RecO. This Mycobacterium bovis (strain ATCC BAA-935 / AF2122/97) protein is Recombination protein RecR.